The primary structure comprises 166 residues: Protein TIFY 11e (166 aa).

The 36-residue stretch at 65–100 folds into the Tify domain; sequence ASSAAAQMTIFYGGRVLVLDECPADRAAALLRLAAS. Residues 123 to 148 carry the Jas motif; the sequence is PVARKASLQRFMEKRKGRLAARGQPY. A Nuclear localization signal motif is present at residues 125-132; the sequence is ARKASLQR.

Belongs to the TIFY/JAZ family. Ubiquitinated. Targeted for degradation by the SCF(COI1) E3 ubiquitin ligase-proteasome pathway during jasmonate signaling.

The protein localises to the nucleus. Functionally, repressor of jasmonate responses. This chain is Protein TIFY 11e, found in Oryza sativa subsp. japonica (Rice).